A 245-amino-acid chain; its full sequence is Keratin-associated protein 10-12 (245 aa).

19 repeat units span residues 36-40 (CCEPP), 41-45 (CCAPA), 62-66 (CCRVT), 84-88 (CCQQS), 94-98 (CCTSS), 104-108 (CCVPV), 109-113 (CCKTV), 114-118 (CCKPV), 119-123 (CCMPV), 124-128 (CCGPS), 131-135 (CCQQS), 141-145 (CCISS), 151-155 (CCVPV), 156-160 (CCKPI), 161-165 (CCVPV), 173-177 (CCQQS), 183-187 (CCTTS), 188-192 (CCRPS), and 214-218 (CCVPT). A 19 X 5 AA repeats of C-C-X(3) region spans residues 36–218 (CCEPPCCAPA…VPVPSCCVPT (183 aa)).

It belongs to the KRTAP type 10 family. In terms of assembly, interacts with hair keratins. As to expression, restricted to a narrow region of the hair fiber cuticle, lying approximately 20 cell layers above the apex of the dermal papilla of the hair root; not detected in any other tissues.

Functionally, in the hair cortex, hair keratin intermediate filaments are embedded in an interfilamentous matrix, consisting of hair keratin-associated proteins (KRTAP), which are essential for the formation of a rigid and resistant hair shaft through their extensive disulfide bond cross-linking with abundant cysteine residues of hair keratins. The matrix proteins include the high-sulfur and high-glycine-tyrosine keratins. The protein is Keratin-associated protein 10-12 (KRTAP10-12) of Homo sapiens (Human).